A 299-amino-acid polypeptide reads, in one-letter code: dTDP-4-dehydrorhamnose reductase (299 aa).

Residues 10–12 (GQV), Asp-30, 39–40 (DF), and 63–65 (AHT) contribute to the NADH site. 11–12 (QV) contributes to the NADPH binding site. NADPH is bound by residues 39-40 (DF), 63-65 (AHT), and Tyr-102. DTDP-beta-L-rhamnose is bound at residue 104–105 (TD). Residues Tyr-128 and Lys-132 each coordinate NADH. The NADPH site is built by Tyr-128 and Lys-132. The active-site Proton donor/acceptor is the Tyr-128. Trp-153 provides a ligand contact to dTDP-beta-L-rhamnose.

This sequence belongs to the dTDP-4-dehydrorhamnose reductase family. In terms of assembly, homodimer. The cofactor is Mg(2+).

The catalysed reaction is dTDP-beta-L-rhamnose + NADP(+) = dTDP-4-dehydro-beta-L-rhamnose + NADPH + H(+). It participates in carbohydrate biosynthesis; dTDP-L-rhamnose biosynthesis. It functions in the pathway bacterial outer membrane biogenesis; LPS O-antigen biosynthesis. Its function is as follows. Involved in the biosynthesis of the dTDP-L-rhamnose which is an important component of lipopolysaccharide (LPS). Catalyzes the reduction of dTDP-6-deoxy-L-lyxo-4-hexulose to yield dTDP-L-rhamnose. RmlD uses NADH and NADPH nearly equally well. This chain is dTDP-4-dehydrorhamnose reductase (rfbD), found in Salmonella typhimurium (strain LT2 / SGSC1412 / ATCC 700720).